Consider the following 86-residue polypeptide: Omega-theraphotoxin-Hhn1e (86 aa).

An N-terminal signal peptide occupies residues 1-21 (MKSIVFVALFGLALLAVVCSA). Positions 22 to 50 (SEGAHKELLKEVVRAMVVDKTDAVQAEER) are excised as a propeptide. 2 disulfide bridges follow: C52–C66 and C65–C78.

It belongs to the neurotoxin 10 (Hwtx-1) family. 17 (Hntx-9) subfamily. As to expression, expressed by the venom gland.

The protein resides in the secreted. Functionally, ion channel inhibitor. The sequence is that of Omega-theraphotoxin-Hhn1e from Cyriopagopus hainanus (Chinese bird spider).